A 682-amino-acid chain; its full sequence is DNA-directed RNA polymerase subunit beta' (682 aa).

Residues C69, C71, C87, and C90 each coordinate Zn(2+). Positions 489, 491, and 493 each coordinate Mg(2+).

It belongs to the RNA polymerase beta' chain family. RpoC1 subfamily. As to quaternary structure, in plastids the minimal PEP RNA polymerase catalytic core is composed of four subunits: alpha, beta, beta', and beta''. When a (nuclear-encoded) sigma factor is associated with the core the holoenzyme is formed, which can initiate transcription. Requires Mg(2+) as cofactor. It depends on Zn(2+) as a cofactor.

Its subcellular location is the plastid. It localises to the chloroplast. The enzyme catalyses RNA(n) + a ribonucleoside 5'-triphosphate = RNA(n+1) + diphosphate. Functionally, DNA-dependent RNA polymerase catalyzes the transcription of DNA into RNA using the four ribonucleoside triphosphates as substrates. The chain is DNA-directed RNA polymerase subunit beta' from Acorus calamus var. americanus (American sweet flag).